The primary structure comprises 302 residues: Tyrosine recombinase XerC (302 aa).

Positions 2–89 (QPLMEQIRAF…AIRSFYRHLL (88 aa)) constitute a Core-binding (CB) domain. One can recognise a Tyr recombinase domain in the interval 110 to 289 (RLPFHLDIDQ…SLDRLMEVYD (180 aa)). Residues Arg-150, Lys-174, His-241, Arg-244, and His-267 contribute to the active site. The O-(3'-phospho-DNA)-tyrosine intermediate role is filled by Tyr-276.

This sequence belongs to the 'phage' integrase family. XerC subfamily. In terms of assembly, forms a cyclic heterotetrameric complex composed of two molecules of XerC and two molecules of XerD.

It localises to the cytoplasm. Functionally, site-specific tyrosine recombinase, which acts by catalyzing the cutting and rejoining of the recombining DNA molecules. The XerC-XerD complex is essential to convert dimers of the bacterial chromosome into monomers to permit their segregation at cell division. It also contributes to the segregational stability of plasmids. This is Tyrosine recombinase XerC from Pelobacter propionicus (strain DSM 2379 / NBRC 103807 / OttBd1).